A 144-amino-acid chain; its full sequence is Transcriptional regulator SlyA (144 aa).

The 134-residue stretch at Glu2–Lys135 folds into the HTH marR-type domain. A DNA-binding region (H-T-H motif) is located at residues Gln49 to Glu72.

The protein belongs to the SlyA family. Homodimer.

Its function is as follows. Transcription regulator that can specifically activate or repress expression of target genes. This chain is Transcriptional regulator SlyA, found in Wigglesworthia glossinidia brevipalpis.